An 874-amino-acid polypeptide reads, in one-letter code: DNA mismatch repair protein MutS (874 aa).

An ATP-binding site is contributed by 630-637 (GPNMAGKS).

Belongs to the DNA mismatch repair MutS family.

Its function is as follows. This protein is involved in the repair of mismatches in DNA. It is possible that it carries out the mismatch recognition step. This protein has a weak ATPase activity. The sequence is that of DNA mismatch repair protein MutS from Chlorobium phaeovibrioides (strain DSM 265 / 1930) (Prosthecochloris vibrioformis (strain DSM 265)).